A 309-amino-acid chain; its full sequence is uncharacterized protein (309 aa).

The interval 272–291 (PSLDAPSETVEAFPEPQKNL) is disordered.

This is an uncharacterized protein from Bacillus subtilis (strain 168).